Reading from the N-terminus, the 162-residue chain is Phosphopantetheine adenylyltransferase (162 aa).

Ser11 contacts substrate. ATP-binding positions include 11–12 and His19; that span reads SF. Lys43, Leu75, and Arg89 together coordinate substrate. Residues 90–92, Glu100, and 125–131 contribute to the ATP site; these read GLR and YSYLSSS.

Belongs to the bacterial CoaD family. As to quaternary structure, homohexamer. Mg(2+) is required as a cofactor.

It localises to the cytoplasm. It catalyses the reaction (R)-4'-phosphopantetheine + ATP + H(+) = 3'-dephospho-CoA + diphosphate. It participates in cofactor biosynthesis; coenzyme A biosynthesis; CoA from (R)-pantothenate: step 4/5. Reversibly transfers an adenylyl group from ATP to 4'-phosphopantetheine, yielding dephospho-CoA (dPCoA) and pyrophosphate. The protein is Phosphopantetheine adenylyltransferase of Geotalea uraniireducens (strain Rf4) (Geobacter uraniireducens).